The primary structure comprises 542 residues: Cytochrome P450 monooxygenase sdnH (542 aa).

The chain crosses the membrane as a helical span at residues 25-45 (LYVAGGILGAFTVYSIILVVY). Positions 141–160 (IIPPRGLGQEDSIGSTRSHD) are disordered. A helical transmembrane segment spans residues 340 to 360 (FMGAGTYPTAATLIFVAYYIL). Cys-483 contacts heme. Residue Asn-506 is glycosylated (N-linked (GlcNAc...) asparagine).

This sequence belongs to the cytochrome P450 family. Heme serves as cofactor.

Its subcellular location is the membrane. Its pathway is antibiotic biosynthesis. Its function is as follows. Cytochrome P450 monooxygenase; part of the gene cluster that mediates the biosynthesis of sordarin and hypoxysordarin, glycoside antibiotics with a unique tetracyclic diterpene aglycone structure. First, the geranylgeranyl diphosphate synthase sdnC constructs GGDP from farnesyl diphosphate and isopentenyl diphosphate. The diterpene cyclase sdnA then catalyzes the cyclization of GGDP to afford cycloaraneosene. Cycloaraneosene is then hydroxylated four times by the putative cytochrome P450 monooxygenases sdnB, sdnE, sdnF and sdnH to give a hydroxylated cycloaraneosene derivative such as cycloaraneosene-8,9,13,19-tetraol. Although the order of the hydroxylations is unclear, at least C8, C9 and C13 of the cycloaraneosene skeleton are hydroxylated before the sordaricin formation. Dehydration of the 13-hydroxy group of the hydroxylated cycloaraneosene derivative might be catalyzed by an unassigned hypothetical protein such as sdnG and sdnP to construct the cyclopentadiene moiety. The FAD-dependent oxidoreductase sdnN is proposed to catalyze the oxidation at C9 of the hydroxylated cycloaraneosene derivative and also catalyze the Baeyer-Villiger oxidation to give the lactone intermediate. The presumed lactone intermediate would be hydrolyzed to give an acrolein moiety and a carboxylate moiety. Then, [4+2]cycloaddition would occur between the acrolein moiety and the cyclopentadiene moiety to give sordaricin. SdnN might also be involved in the [4+2]cycloaddition after the hypothesized oxidation to accommodate the oxidized product and prompt the [4+2]cycloaddition. GDP-6-deoxy-D-altrose may be biosynthesized from GDP-D-mannose by the putative GDP-mannose-4,6-dehydratase sdnI and the short-chain dehydrogenase sdnK. The glycosyltransferase sdnJ catalyzes the attachment of 6-deoxy-D-altrose onto the 19-hydroxy group of sordaricin to give 4'-O-demethylsordarin. The methyltransferase sdnD would complete the biosynthesis of sordarin. Sordarin can be further modified into hypoxysordarin. The unique acyl chain at the 3'-hydroxy group of hypoxysordarin would be constructed by an iterative type I PKS sdnO and the trans-acting polyketide methyltransferase sdnL. SdnL would be responsible for the introduction of an alpha-methyl group of the polyketide chain. Alternatively, the beta-lactamase-like protein sdnR might be responsible for the cleavage and transfer of the polyketide chain from the PKS sdnO to sordarin. Two putative cytochrome P450 monooxygenases, sdnQ and sdnT, might catalyze the epoxidations of the polyketide chain to complete the biosynthesis of hypoxysordarin. Transcriptional regulators sdnM and sdnS are presumably encoded for the transcriptional regulation of the expression of the sdn gene cluster. The protein is Cytochrome P450 monooxygenase sdnH of Sordaria araneosa (Pleurage araneosa).